The following is a 269-amino-acid chain: Tryptophan synthase alpha chain (269 aa).

Residues Glu-49 and Asp-60 each act as proton acceptor in the active site.

This sequence belongs to the TrpA family. Tetramer of two alpha and two beta chains.

The catalysed reaction is (1S,2R)-1-C-(indol-3-yl)glycerol 3-phosphate + L-serine = D-glyceraldehyde 3-phosphate + L-tryptophan + H2O. The protein operates within amino-acid biosynthesis; L-tryptophan biosynthesis; L-tryptophan from chorismate: step 5/5. Functionally, the alpha subunit is responsible for the aldol cleavage of indoleglycerol phosphate to indole and glyceraldehyde 3-phosphate. In Histophilus somni (strain 2336) (Haemophilus somnus), this protein is Tryptophan synthase alpha chain.